A 400-amino-acid polypeptide reads, in one-letter code: Enoyl-[acyl-carrier-protein] reductase [NADH] (400 aa).

NAD(+)-binding positions include 48 to 53 (GASSGY), 74 to 75 (FE), 111 to 112 (DA), and 139 to 140 (LA). Residue Y225 coordinates substrate. Y235 serves as the catalytic Proton donor. NAD(+) is bound by residues K244 and 273–275 (VVT).

This sequence belongs to the TER reductase family. In terms of assembly, monomer.

It catalyses the reaction a 2,3-saturated acyl-[ACP] + NAD(+) = a (2E)-enoyl-[ACP] + NADH + H(+). It functions in the pathway lipid metabolism; fatty acid biosynthesis. In terms of biological role, involved in the final reduction of the elongation cycle of fatty acid synthesis (FAS II). Catalyzes the reduction of a carbon-carbon double bond in an enoyl moiety that is covalently linked to an acyl carrier protein (ACP). In Marinomonas sp. (strain MWYL1), this protein is Enoyl-[acyl-carrier-protein] reductase [NADH].